The primary structure comprises 220 residues: MELYLDTSDVVAVKALSRIFPLAGVTTNPSIIAAGKKPLEVVLPELHEAMGGQGRLFAQVMATTAEGMVNDARKLRSIIADIVVKVPVTTEGLAAIKMLKAEGIPTLGTAVYGAAQGLLSALAGAEYVAPYVNRIDAQGGSGIQTVTDLHQLLKMHAPRAKVLAASFKTPRQALDCLLAGCESITLPLDVAQQMISYPAVDAAVAKFEQDWQGAFGRTSI.

Lysine 85 (schiff-base intermediate with substrate) is an active-site residue.

This sequence belongs to the transaldolase family. Type 3A subfamily. In terms of assembly, homodecamer.

The protein resides in the cytoplasm. It carries out the reaction beta-D-fructose 6-phosphate = dihydroxyacetone + D-glyceraldehyde 3-phosphate. In terms of biological role, catalyzes the reversible formation of fructose 6-phosphate from dihydroxyacetone and D-glyceraldehyde 3-phosphate via an aldolization reaction. In Escherichia coli O157:H7, this protein is Fructose-6-phosphate aldolase 1 (fsaA).